A 298-amino-acid chain; its full sequence is Phosphatidylserine decarboxylase proenzyme (298 aa).

Active-site charge relay system; for autoendoproteolytic cleavage activity residues include Asp113, His169, and Ser256. Residue Ser256 is the Schiff-base intermediate with substrate; via pyruvic acid; for decarboxylase activity of the active site. Position 256 is a pyruvic acid (Ser); by autocatalysis (Ser256).

Belongs to the phosphatidylserine decarboxylase family. PSD-B subfamily. Prokaryotic type II sub-subfamily. Heterodimer of a large membrane-associated beta subunit and a small pyruvoyl-containing alpha subunit. Pyruvate is required as a cofactor. Post-translationally, is synthesized initially as an inactive proenzyme. Formation of the active enzyme involves a self-maturation process in which the active site pyruvoyl group is generated from an internal serine residue via an autocatalytic post-translational modification. Two non-identical subunits are generated from the proenzyme in this reaction, and the pyruvate is formed at the N-terminus of the alpha chain, which is derived from the carboxyl end of the proenzyme. The autoendoproteolytic cleavage occurs by a canonical serine protease mechanism, in which the side chain hydroxyl group of the serine supplies its oxygen atom to form the C-terminus of the beta chain, while the remainder of the serine residue undergoes an oxidative deamination to produce ammonia and the pyruvoyl prosthetic group on the alpha chain. During this reaction, the Ser that is part of the protease active site of the proenzyme becomes the pyruvoyl prosthetic group, which constitutes an essential element of the active site of the mature decarboxylase.

It is found in the cell membrane. The catalysed reaction is a 1,2-diacyl-sn-glycero-3-phospho-L-serine + H(+) = a 1,2-diacyl-sn-glycero-3-phosphoethanolamine + CO2. It participates in phospholipid metabolism; phosphatidylethanolamine biosynthesis; phosphatidylethanolamine from CDP-diacylglycerol: step 2/2. Its function is as follows. Catalyzes the formation of phosphatidylethanolamine (PtdEtn) from phosphatidylserine (PtdSer). This chain is Phosphatidylserine decarboxylase proenzyme, found in Desulfitobacterium hafniense (strain Y51).